The primary structure comprises 339 residues: Phospho-N-acetylmuramoyl-pentapeptide-transferase (339 aa).

Helical transmembrane passes span 4-24, 53-73, 80-100, 113-133, 145-165, 176-196, 202-222, 228-248, 253-273, and 318-338; these read TTII…PFFI, MGGT…AFVL, AFGA…IGFL, GLTA…FYLV, LFGF…FWVV, GIDG…SVIA, FDVL…FVYN, VFMG…ISIT, WTLL…MLQV, and VDFF…AILY.

Belongs to the glycosyltransferase 4 family. MraY subfamily. The cofactor is Mg(2+).

Its subcellular location is the cell membrane. The catalysed reaction is UDP-N-acetyl-alpha-D-muramoyl-L-alanyl-gamma-D-glutamyl-L-lysyl-D-alanyl-D-alanine + di-trans,octa-cis-undecaprenyl phosphate = Mur2Ac(oyl-L-Ala-gamma-D-Glu-L-Lys-D-Ala-D-Ala)-di-trans,octa-cis-undecaprenyl diphosphate + UMP. It functions in the pathway cell wall biogenesis; peptidoglycan biosynthesis. Functionally, catalyzes the initial step of the lipid cycle reactions in the biosynthesis of the cell wall peptidoglycan: transfers peptidoglycan precursor phospho-MurNAc-pentapeptide from UDP-MurNAc-pentapeptide onto the lipid carrier undecaprenyl phosphate, yielding undecaprenyl-pyrophosphoryl-MurNAc-pentapeptide, known as lipid I. This chain is Phospho-N-acetylmuramoyl-pentapeptide-transferase, found in Streptococcus mutans serotype c (strain ATCC 700610 / UA159).